Consider the following 251-residue polypeptide: Astacin (251 aa).

An N-terminal signal peptide occupies residues 1 to 15 (MQCAVLLVLLGVVAA). Positions 16 to 49 (SPIIPEAARALYYNDGMFEGDIKLRAGRQPARVG) are cleaved as a propeptide — activation peptide. The region spanning 50–248 (AAILGDEYLW…INNLYTNECS (199 aa)) is the Peptidase M12A domain. Disulfide bonds link C91-C247 and C113-C133. H141 lines the Zn(2+) pocket. E142 is an active-site residue. Residues H145 and H151 each contribute to the Zn(2+) site. The propeptide occupies 250–251 (RH).

As to quaternary structure, monomer. Requires Zn(2+) as cofactor.

The catalysed reaction is Hydrolysis of peptide bonds in substrates containing five or more amino acids, preferentially with Ala in P1', and Pro in P2'.. Its function is as follows. Metalloprotease. This protease prefers to cleave in front of small aliphatic residues (P1'). The presence of Lys or Arg in the P1 and P2 position yields high-turnover substrates. In the P3 position the enzyme prefers Pro &gt; Val &gt; Leu &gt; Ala &gt; Gly. The sequence is that of Astacin from Astacus astacus (Noble crayfish).